A 255-amino-acid chain; its full sequence is uncharacterized protein (255 aa).

Residues 1-23 (MKRLNKLVLGIIFLFLVISITAG) form the signal peptide. The N-palmitoyl cysteine moiety is linked to residue cysteine 24. A lipid anchor (S-diacylglycerol cysteine) is attached at cysteine 24.

This sequence belongs to the staphylococcal tandem lipoprotein family.

The protein localises to the cell membrane. This is an uncharacterized protein from Staphylococcus aureus (strain USA300).